The chain runs to 343 residues: MSLFVASTRSAFRAAAPIKRSFQTRRSYATEPSKGGSSSTILLGAAAVGLAGAGAYFFSGAGAAKKAEASVKQVTEKITPGEIKKAFVGGDQGWLSLKLEEVELVNHNTKRLRFRLPEDDMVSGLHVASAILTKFKPIDAEKAVLRPYTPISDESAQGYIDLLVKKYEGGPMSTYLHDMAPGQRLDIKGPLPKYPWEANKHKHIALVAGGTGITPMYQLIRAIFNNPDDKTKVTLVFGNVSEEDVLLKHELATIENHYPQRFRAFYVLDNPPKEWAGNKGYINKDLLKTVLPEPKNEDIKIFVCGPPGMMNSISGNKKSPRDQGELTGILKELGYSPDQVYKF.

Residues 41 to 61 (ILLGAAAVGLAGAGAYFFSGA) traverse the membrane as a helical segment. The FAD-binding FR-type domain maps to 92–197 (QGWLSLKLEE…KGPLPKYPWE (106 aa)). 200 to 235 (KHKHIALVAGGTGITPMYQLIRAIFNNPDDKTKVTL) provides a ligand contact to FAD.

Belongs to the flavoprotein pyridine nucleotide cytochrome reductase family. Requires FAD as cofactor.

It localises to the mitochondrion outer membrane. The catalysed reaction is 2 Fe(III)-[cytochrome b5] + NADH = 2 Fe(II)-[cytochrome b5] + NAD(+) + H(+). May mediate the reduction of outer membrane cytochrome b5. The sequence is that of NADH-cytochrome b5 reductase 2 (mcr-1) from Neurospora crassa (strain ATCC 24698 / 74-OR23-1A / CBS 708.71 / DSM 1257 / FGSC 987).